Consider the following 360-residue polypeptide: Peptide chain release factor 1 (360 aa).

Position 235 is an N5-methylglutamine (Q235).

This sequence belongs to the prokaryotic/mitochondrial release factor family. Post-translationally, methylated by PrmC. Methylation increases the termination efficiency of RF1.

The protein resides in the cytoplasm. Its function is as follows. Peptide chain release factor 1 directs the termination of translation in response to the peptide chain termination codons UAG and UAA. This is Peptide chain release factor 1 from Burkholderia pseudomallei (strain 1106a).